The following is a 200-amino-acid chain: Holliday junction branch migration complex subunit RuvA (200 aa).

Residues methionine 1–isoleucine 63 form a domain I region. The interval asparagine 64–leucine 142 is domain II. Residues asparagine 143–histidine 149 are flexible linker. Positions alanine 150–alanine 200 are domain III.

The protein belongs to the RuvA family. In terms of assembly, homotetramer. Forms an RuvA(8)-RuvB(12)-Holliday junction (HJ) complex. HJ DNA is sandwiched between 2 RuvA tetramers; dsDNA enters through RuvA and exits via RuvB. An RuvB hexamer assembles on each DNA strand where it exits the tetramer. Each RuvB hexamer is contacted by two RuvA subunits (via domain III) on 2 adjacent RuvB subunits; this complex drives branch migration. In the full resolvosome a probable DNA-RuvA(4)-RuvB(12)-RuvC(2) complex forms which resolves the HJ.

The protein localises to the cytoplasm. Its function is as follows. The RuvA-RuvB-RuvC complex processes Holliday junction (HJ) DNA during genetic recombination and DNA repair, while the RuvA-RuvB complex plays an important role in the rescue of blocked DNA replication forks via replication fork reversal (RFR). RuvA specifically binds to HJ cruciform DNA, conferring on it an open structure. The RuvB hexamer acts as an ATP-dependent pump, pulling dsDNA into and through the RuvAB complex. HJ branch migration allows RuvC to scan DNA until it finds its consensus sequence, where it cleaves and resolves the cruciform DNA. This is Holliday junction branch migration complex subunit RuvA from Staphylococcus saprophyticus subsp. saprophyticus (strain ATCC 15305 / DSM 20229 / NCIMB 8711 / NCTC 7292 / S-41).